The chain runs to 719 residues: Homeobox protein SIX5 (719 aa).

Composition is skewed to low complexity over residues Met1–Thr22 and Gln31–Ser65. Disordered regions lie at residues Met1–Val73 and Trp241–Met287. The homeobox DNA-binding region spans Gly194–Thr253. Residues Glu272–Arg282 show a composition bias toward basic and acidic residues.

This sequence belongs to the SIX/Sine oculis homeobox family. As to quaternary structure, probably binds DNA dimer. Interacts with EYA3, and probably EYA1 and EYA2.

Its subcellular location is the nucleus. Functionally, transcription factor that is thought to be involved in regulation of organogenesis. May be involved in determination and maintenance of retina formation. Binds a 5'-GGTGTCAG-3' motif present in the ARE regulatory element of ATP1A1. Binds a 5'-TCA[AG][AG]TTNC-3' motif present in the MEF3 element in the myogenin promoter, and in the IGFBP5 promoter. Thought to be regulated by association with Dach and Eya proteins, and seems to be coactivated by EYA1, EYA2 and EYA3. This chain is Homeobox protein SIX5 (Six5), found in Mus musculus (Mouse).